A 274-amino-acid polypeptide reads, in one-letter code: 4-deoxy-L-threo-5-hexosulose-uronate ketol-isomerase (274 aa).

H192, H194, E199, and H241 together coordinate Zn(2+).

Belongs to the KduI family. Zn(2+) is required as a cofactor.

The catalysed reaction is 5-dehydro-4-deoxy-D-glucuronate = 3-deoxy-D-glycero-2,5-hexodiulosonate. Its pathway is glycan metabolism; pectin degradation; 2-dehydro-3-deoxy-D-gluconate from pectin: step 4/5. Functionally, catalyzes the isomerization of 5-dehydro-4-deoxy-D-glucuronate to 3-deoxy-D-glycero-2,5-hexodiulosonate. In Cereibacter sphaeroides (strain ATCC 17029 / ATH 2.4.9) (Rhodobacter sphaeroides), this protein is 4-deoxy-L-threo-5-hexosulose-uronate ketol-isomerase.